The sequence spans 189 residues: UPF0251 protein MTH_1178 (189 aa).

Belongs to the UPF0251 family.

This Methanothermobacter thermautotrophicus (strain ATCC 29096 / DSM 1053 / JCM 10044 / NBRC 100330 / Delta H) (Methanobacterium thermoautotrophicum) protein is UPF0251 protein MTH_1178.